The primary structure comprises 386 residues: Ferrochelatase (386 aa).

Fe cation contacts are provided by His196 and Glu277.

The protein belongs to the ferrochelatase family.

Its subcellular location is the cytoplasm. The catalysed reaction is heme b + 2 H(+) = protoporphyrin IX + Fe(2+). It functions in the pathway porphyrin-containing compound metabolism; protoheme biosynthesis; protoheme from protoporphyrin-IX: step 1/1. Its function is as follows. Catalyzes the ferrous insertion into protoporphyrin IX. This Picosynechococcus sp. (strain ATCC 27264 / PCC 7002 / PR-6) (Agmenellum quadruplicatum) protein is Ferrochelatase.